The sequence spans 205 residues: Keratin-associated protein 4-6 (205 aa).

Tandem repeats lie at residues 20–24 (CCRPS), 25–29 (CCQTT), 30–34 (CCRTT), 35–39 (CCRPS), 40–44 (CCVSS), 45–49 (CCRPQ), 50–54 (CCQSV), 55–59 (CCQPT), 60–64 (CCRPS), 65–68 (CCPS), 69–73 (CCQTT), 74–78 (CCRTT), 79–83 (CCRPS), 84–88 (CCVSS), 89–93 (CCRPQ), 94–98 (CCQSV), 99–103 (CCQPT), 104–108 (CCRPS), 114–118 (CCRPS), 119–123 (CCVSR), 124–128 (CCRSQ), 129–133 (CCQSV), 134–138 (CCQPT), 139–143 (CCRPS), 144–148 (CCISS), 149–153 (CCRPS), 154–158 (CCESS), 159–163 (CCRPC), 164–168 (CCRPC), and 169–173 (CCLRP). The segment at 20-173 (CCRPSCCQTT…CCRPCCCLRP (154 aa)) is 30 X 5 AA repeats of C-C-[IRQVEL]-[SPTR]-[STVQRCP].

Belongs to the KRTAP type 4 family. In terms of assembly, interacts with hair keratins. As to expression, expressed in the hair follicles.

Its function is as follows. In the hair cortex, hair keratin intermediate filaments are embedded in an interfilamentous matrix, consisting of hair keratin-associated proteins (KRTAP), which are essential for the formation of a rigid and resistant hair shaft through their extensive disulfide bond cross-linking with abundant cysteine residues of hair keratins. The matrix proteins include the high-sulfur and high-glycine-tyrosine keratins. This Homo sapiens (Human) protein is Keratin-associated protein 4-6 (KRTAP4-6).